The sequence spans 153 residues: 3-dehydroquinate dehydratase (153 aa).

The active-site Proton acceptor is Tyr26. Residues Asn77, His83, and Asp90 each coordinate substrate. The active-site Proton donor is the His103. Substrate is bound by residues 104–105 (LS) and Arg114.

The protein belongs to the type-II 3-dehydroquinase family. In terms of assembly, homododecamer.

It carries out the reaction 3-dehydroquinate = 3-dehydroshikimate + H2O. The protein operates within metabolic intermediate biosynthesis; chorismate biosynthesis; chorismate from D-erythrose 4-phosphate and phosphoenolpyruvate: step 3/7. Its function is as follows. Catalyzes a trans-dehydration via an enolate intermediate. This chain is 3-dehydroquinate dehydratase, found in Colwellia psychrerythraea (strain 34H / ATCC BAA-681) (Vibrio psychroerythus).